Reading from the N-terminus, the 143-residue chain is Ribosome maturation factor RimP (143 aa).

Belongs to the RimP family.

The protein resides in the cytoplasm. In terms of biological role, required for maturation of 30S ribosomal subunits. In Borrelia hermsii (strain HS1 / DAH), this protein is Ribosome maturation factor RimP.